The sequence spans 425 residues: Histone-binding protein RBBP4 (425 aa).

The residue at position 2 (Ala2) is an N-acetylalanine. WD repeat units follow at residues 32-125 (YDLV…NHEG), 126-175 (EVNR…RLRG), 176-223 (HQKE…KTIF), 225-270 (GHTA…HSVD), 271-314 (AHTA…HSFE), 315-371 (SHKD…FIHG), and 372-404 (GHTA…VWQM). An interaction with HAT1 region spans residues 361-406 (DGPPELLFIHGGHTAKISDFSWNPNEPWVICSVSEDNIMQVWQMAE).

It belongs to the WD repeat RBAP46/RBAP48/MSI1 family. Binds directly to histone H4, probably via helix 1 of the histone fold, a region that is not accessible when histone H4 is in chromatin. Interacts with CHAF1A, HDAC1, HDAC2, HDAC3 and HIRA. May also interact with HAT1.

Its subcellular location is the nucleus. The protein resides in the chromosome. It localises to the telomere. Its function is as follows. Core histone-binding subunit that may target chromatin assembly factors, chromatin remodeling factors and histone deacetylases to their histone substrates in a manner that is regulated by nucleosomal DNA. Component of several complexes which regulate chromatin metabolism. This is Histone-binding protein RBBP4 (RBBP4) from Gallus gallus (Chicken).